We begin with the raw amino-acid sequence, 409 residues long: Putative competence-damage inducible protein (409 aa).

The protein belongs to the CinA family.

The protein is Putative competence-damage inducible protein of Clostridium botulinum (strain Loch Maree / Type A3).